The chain runs to 398 residues: Succinate--CoA ligase [ADP-forming] subunit beta (398 aa).

The 229-residue stretch at 9–237 folds into the ATP-grasp domain; the sequence is RDLFETHGVP…AGGLDILELK (229 aa). ATP is bound by residues lysine 45, 52-54, alanine 94, and glutamate 99; that span reads GRG. Mg(2+) is bound by residues asparagine 191 and aspartate 205. Substrate is bound by residues asparagine 257 and 319 to 321; that span reads GIT.

Belongs to the succinate/malate CoA ligase beta subunit family. In terms of assembly, heterotetramer of two alpha and two beta subunits. Requires Mg(2+) as cofactor.

It catalyses the reaction succinate + ATP + CoA = succinyl-CoA + ADP + phosphate. It carries out the reaction GTP + succinate + CoA = succinyl-CoA + GDP + phosphate. It functions in the pathway carbohydrate metabolism; tricarboxylic acid cycle; succinate from succinyl-CoA (ligase route): step 1/1. In terms of biological role, succinyl-CoA synthetase functions in the citric acid cycle (TCA), coupling the hydrolysis of succinyl-CoA to the synthesis of either ATP or GTP and thus represents the only step of substrate-level phosphorylation in the TCA. The beta subunit provides nucleotide specificity of the enzyme and binds the substrate succinate, while the binding sites for coenzyme A and phosphate are found in the alpha subunit. The protein is Succinate--CoA ligase [ADP-forming] subunit beta of Corynebacterium glutamicum (strain ATCC 13032 / DSM 20300 / JCM 1318 / BCRC 11384 / CCUG 27702 / LMG 3730 / NBRC 12168 / NCIMB 10025 / NRRL B-2784 / 534).